The sequence spans 884 residues: Valine--tRNA ligase (884 aa).

The 'HIGH' region signature appears at proline 46–histidine 56. The short motif at lysine 520 to serine 524 is the 'KMSKS' region element. Residue lysine 523 coordinates ATP. The stretch at leucine 809–arginine 844 forms a coiled coil.

The protein belongs to the class-I aminoacyl-tRNA synthetase family. ValS type 1 subfamily. In terms of assembly, monomer.

Its subcellular location is the cytoplasm. It catalyses the reaction tRNA(Val) + L-valine + ATP = L-valyl-tRNA(Val) + AMP + diphosphate. Its function is as follows. Catalyzes the attachment of valine to tRNA(Val). As ValRS can inadvertently accommodate and process structurally similar amino acids such as threonine, to avoid such errors, it has a 'posttransfer' editing activity that hydrolyzes mischarged Thr-tRNA(Val) in a tRNA-dependent manner. In Streptococcus agalactiae serotype Ia (strain ATCC 27591 / A909 / CDC SS700), this protein is Valine--tRNA ligase.